The chain runs to 311 residues: tRNA dimethylallyltransferase (311 aa).

12-19 (GPTASGKT) is a binding site for ATP. Position 14 to 19 (14 to 19 (TASGKT)) interacts with substrate. Interaction with substrate tRNA stretches follow at residues 37–40 (DSAL), 161–165 (QRINR), and 241–246 (RCVGYR).

It belongs to the IPP transferase family. In terms of assembly, monomer. Mg(2+) is required as a cofactor.

The enzyme catalyses adenosine(37) in tRNA + dimethylallyl diphosphate = N(6)-dimethylallyladenosine(37) in tRNA + diphosphate. Catalyzes the transfer of a dimethylallyl group onto the adenine at position 37 in tRNAs that read codons beginning with uridine, leading to the formation of N6-(dimethylallyl)adenosine (i(6)A). This is tRNA dimethylallyltransferase from Histophilus somni (strain 2336) (Haemophilus somnus).